A 121-amino-acid chain; its full sequence is Neuropeptide-like protein 7 (121 aa).

The signal sequence occupies residues 1–22 (MYIKAALLIVVLFGVASQITSA).

May regulate lifespan in response to food availability and oxidative stress. The chain is Neuropeptide-like protein 7 from Caenorhabditis elegans.